The primary structure comprises 235 residues: REF/SRPP-like protein At2g47780 (235 aa).

A compositionally biased stretch (acidic residues) spans 1–12 (MAEDEIVVEEEQ). A disordered region spans residues 1–32 (MAEDEIVVEEEQSQPQEITPVPPSSSSSPSLV).

It belongs to the REF/SRPP family.

The sequence is that of REF/SRPP-like protein At2g47780 from Arabidopsis thaliana (Mouse-ear cress).